We begin with the raw amino-acid sequence, 152 residues long: Transcription elongation factor Spt5 (152 aa).

Residues 94-124 (PGDLVEVIAGPFKGQKAKVVKIDESKDEVVV) form the KOW domain.

It belongs to the archaeal Spt5 family. Heterodimer composed of Spt4 and Spt5. Interacts with RNA polymerase (RNAP) independently of nucleic acids. Forms a homodimer in solution.

In terms of biological role, stimulates transcription elongation. The polypeptide is Transcription elongation factor Spt5 (Pyrococcus furiosus (strain ATCC 43587 / DSM 3638 / JCM 8422 / Vc1)).